The primary structure comprises 186 residues: Ribosome-recycling factor (186 aa).

The protein belongs to the RRF family.

It localises to the cytoplasm. Its function is as follows. Responsible for the release of ribosomes from messenger RNA at the termination of protein biosynthesis. May increase the efficiency of translation by recycling ribosomes from one round of translation to another. The polypeptide is Ribosome-recycling factor (Cupriavidus metallidurans (strain ATCC 43123 / DSM 2839 / NBRC 102507 / CH34) (Ralstonia metallidurans)).